The following is a 98-amino-acid chain: NADH-ubiquinone oxidoreductase chain 4L (98 aa).

The next 3 helical transmembrane spans lie at 1–21 (MPSIYVNIFLAFIFALLGMLI), 29–49 (SLLCLEGMMLSLFILITLTAL), and 61–81 (IVLLVFAACEAAIGLALLVMV).

The protein belongs to the complex I subunit 4L family. Core subunit of respiratory chain NADH dehydrogenase (Complex I) which is composed of 45 different subunits.

It is found in the mitochondrion inner membrane. The enzyme catalyses a ubiquinone + NADH + 5 H(+)(in) = a ubiquinol + NAD(+) + 4 H(+)(out). Core subunit of the mitochondrial membrane respiratory chain NADH dehydrogenase (Complex I) which catalyzes electron transfer from NADH through the respiratory chain, using ubiquinone as an electron acceptor. Part of the enzyme membrane arm which is embedded in the lipid bilayer and involved in proton translocation. The protein is NADH-ubiquinone oxidoreductase chain 4L (MT-ND4L) of Lepus europaeus (European hare).